The primary structure comprises 855 residues: MAEGFAVNRQWIGPEEAEELLDFDIATQMNEEGPLNPGINLFRVPGITETEKQEYCNILQPKLQDLRNEIQEVKLEEGNAGKFRRARFLRYSDETILSLIHLFIGYCTYLCKRNKLGTLVHNIDIEAPQEECYSNRERGTTVNIKYSRRCCIGTTALYLLLLTGIIIYTQTTQAQVVWRLPPLVVPVEESEIIFWDCWAPEEPACQDFLGAMIYLKASTNISIQEGPTLGNWAREIWGTLFKKATRQCRRGRIWRRWNETITGPSGCANNTCYNISVIVPDYQCYLDRVDTWLQGKVNISLCLTGGKMLYNKDTKQLSYCTDPLQIPLINYTFGPNQTCMWNTSQIQDSDIPKCGWWNQIAYYNSCRWEQTDVKFHCQRTQSQPGTWLRTISSWKQKNRWEWRPDFESEKVRVSLQCNTTKNLTFAMRSSGDYGEVTGAWIEFGCHRNKSKLHSDARFRIRCRWNVGDNTSLIDTCGNDPNVSGANPVDCTMYANRMYNCSLQNGFTMKVDDLIMHFNMTKAVEMYNIAGNWSCTSDLPSTWGYMNCNCTNSSSTDSNKMACPKRQGILRNWYNPVAGLRQSLEKYQVVKQPDYLVVPREVMEYKPRRKRAAIHVMLALATVLSMAGAGTGATAIGMVTQYHQVLATHQETIEKITEALKVNNLRLVTLEHQVLVIGLKVEAIEKFLYTAFAMQELGCNQNQFFCKVPPELWQRYNMTINQTIWNHGNITLGEWYNQTKDLQQKFYEIIMDMEQNNVQGRKGLQQLQEWEDWVGWLGNIPRYLKGLLGGILGIGLGVLLLILCLPTLVDCIRNCISKVLGYTVIAMPEVEEEEIQPPMELRRNGRQCDMSEKEEE.

Topologically, residues 1–784 (MAEGFAVNRQ…WLGNIPRYLK (784 aa)) are extracellular. Asn-220, Asn-258, Asn-269, Asn-274, Asn-298, Asn-330, Asn-336, Asn-342, Asn-418, Asn-422, Asn-448, Asn-469, Asn-481, Asn-499, Asn-518, Asn-531, and Asn-548 each carry an N-linked (GlcNAc...) asparagine; by host glycan. The tract at residues 615-635 (VMLALATVLSMAGAGTGATAI) is fusion peptide. A coiled-coil region spans residues 642-692 (HQVLATHQETIEKITEALKVNNLRLVTLEHQVLVIGLKVEAIEKFLYTAFA). Residues 661 to 679 (VNNLRLVTLEHQVLVIGLK) form an immunosuppression region. Asn-716, Asn-720, and Asn-736 each carry an N-linked (GlcNAc...) asparagine; by host glycan. Residues 735 to 771 (YNQTKDLQQKFYEIIMDMEQNNVQGRKGLQQLQEWED) adopt a coiled-coil conformation. Residues 785–805 (GLLGGILGIGLGVLLLILCLP) form a helical membrane-spanning segment. Topologically, residues 806–855 (TLVDCIRNCISKVLGYTVIAMPEVEEEEIQPPMELRRNGRQCDMSEKEEE) are cytoplasmic. The disordered stretch occupies residues 835–855 (QPPMELRRNGRQCDMSEKEEE).

In terms of assembly, the mature envelope protein (Env) consists of a trimer of SU-TM heterodimers attached by noncovalent interactions or by a labile interchain disulfide bond. In terms of processing, specific enzymatic cleavages in vivo yield mature proteins. Envelope glycoproteins are synthesized as an inactive precursor that is N-glycosylated and processed likely by host cell furin or by a furin-like protease in the Golgi to yield the mature SU and TM proteins. The cleavage site between SU and TM requires the minimal sequence [KR]-X-[KR]-R.

The protein localises to the virion membrane. It localises to the host cell membrane. Its function is as follows. The surface protein (SU) attaches the virus to the host cell by binding to its receptor. This interaction triggers the refolding of the transmembrane protein (TM) and is thought to activate its fusogenic potential by unmasking its fusion peptide. Fusion occurs at the host cell plasma membrane. The transmembrane protein (TM) acts as a class I viral fusion protein. Under the current model, the protein has at least 3 conformational states: pre-fusion native state, pre-hairpin intermediate state, and post-fusion hairpin state. During viral and target cell membrane fusion, the coiled coil regions (heptad repeats) assume a trimer-of-hairpins structure, positioning the fusion peptide in close proximity to the C-terminal region of the ectodomain. The formation of this structure appears to drive apposition and subsequent fusion of viral and target cell membranes. Membranes fusion leads to delivery of the nucleocapsid into the cytoplasm. The chain is Envelope glycoprotein gp150 (env) from Feline immunodeficiency virus (strain UK2) (FIV).